Consider the following 315-residue polypeptide: Methylglutaconyl-CoA hydratase, mitochondrial (315 aa).

The transit peptide at Met1–Tyr43 directs the protein to the mitochondrion. Lys76 bears the N6-acetyllysine; alternate mark. Residue Lys76 is modified to N6-succinyllysine; alternate. An RNA-binding region spans residues Lys81–Lys95. The residue at position 85 (Lys85) is an N6-succinyllysine. Residues Lys89 and Lys120 each carry the N6-acetyllysine; alternate modification. N6-succinyllysine; alternate occurs at positions 89 and 120. N6-succinyllysine occurs at positions 124 and 136. N6-acetyllysine; alternate occurs at positions 180 and 187. 2 positions are modified to N6-succinyllysine; alternate: Lys180 and Lys187. At Lys305 the chain carries N6-succinyllysine.

Belongs to the enoyl-CoA hydratase/isomerase family. In terms of assembly, homohexamer.

It is found in the mitochondrion. It catalyses the reaction (3S)-3-hydroxy-3-methylglutaryl-CoA = 3-methyl-(2E)-glutaconyl-CoA + H2O. The catalysed reaction is (3S)-citramalyl-CoA = itaconyl-CoA + H2O. It carries out the reaction 3-hydroxyisovaleryl-CoA = 3-methylbut-2-enoyl-CoA + H2O. The enzyme catalyses (S)-3-hydroxyglutaryl-CoA = (2E)-glutaconyl-CoA + H2O. It participates in amino-acid degradation; L-leucine degradation; (S)-3-hydroxy-3-methylglutaryl-CoA from 3-isovaleryl-CoA: step 3/3. Catalyzes the fifth step in the leucine degradation pathway, the reversible hydration of 3-methylglutaconyl-CoA (3-MG-CoA) to 3-hydroxy-3-methylglutaryl-CoA (HMG-CoA). Can catalyze the reverse reaction but at a much lower rate in vitro. HMG-CoA is then quickly degraded by another enzyme (such as HMG-CoA lyase) to give acetyl-CoA and acetoacetate. Uses other substrates such as (2E)-glutaconyl-CoA efficiently in vitro, and to a lesser extent 3-methylcrotonyl-CoA (3-methyl-(2E)-butenoyl-CoA), crotonyl-CoA ((2E)-butenoyl-CoA) and 3-hydroxybutanoyl-CoA (the missing carboxylate reduces affinity to the active site). Originally it was identified as an RNA-binding protein as it binds to AU-rich elements (AREs) in vitro. AREs direct rapid RNA degradation and mRNA deadenylation. Might have itaconyl-CoA hydratase activity, converting itaconyl-CoA into citramalyl-CoA in the C5-dicarboxylate catabolism pathway. The C5-dicarboxylate catabolism pathway is required to detoxify itaconate, an antimicrobial metabolite and immunomodulator produced by macrophages during certain infections, that can act as a vitamin B12-poisoning metabolite. The polypeptide is Methylglutaconyl-CoA hydratase, mitochondrial (Rattus norvegicus (Rat)).